Here is a 234-residue protein sequence, read N- to C-terminus: Probable chemoreceptor glutamine deamidase CheD (234 aa).

The protein belongs to the CheD family.

The enzyme catalyses L-glutaminyl-[protein] + H2O = L-glutamyl-[protein] + NH4(+). In terms of biological role, probably deamidates glutamine residues to glutamate on methyl-accepting chemotaxis receptors (MCPs), playing an important role in chemotaxis. This chain is Probable chemoreceptor glutamine deamidase CheD, found in Burkholderia pseudomallei (strain 1710b).